A 223-amino-acid polypeptide reads, in one-letter code: ATP-dependent Clp protease proteolytic subunit 2 (223 aa).

Residue serine 118 is the Nucleophile of the active site. The active site involves histidine 143.

This sequence belongs to the peptidase S14 family. In terms of assembly, fourteen ClpP subunits assemble into 2 heptameric rings which stack back to back to give a disk-like structure with a central cavity, resembling the structure of eukaryotic proteasomes.

Its subcellular location is the cytoplasm. The enzyme catalyses Hydrolysis of proteins to small peptides in the presence of ATP and magnesium. alpha-casein is the usual test substrate. In the absence of ATP, only oligopeptides shorter than five residues are hydrolyzed (such as succinyl-Leu-Tyr-|-NHMec, and Leu-Tyr-Leu-|-Tyr-Trp, in which cleavage of the -Tyr-|-Leu- and -Tyr-|-Trp bonds also occurs).. Cleaves peptides in various proteins in a process that requires ATP hydrolysis. Has a chymotrypsin-like activity. Plays a major role in the degradation of misfolded proteins. The chain is ATP-dependent Clp protease proteolytic subunit 2 from Leifsonia xyli subsp. xyli (strain CTCB07).